The following is a 56-amino-acid chain: Prokaryotic ubiquitin-like protein UBact (56 aa).

The disordered stretch occupies residues methionine 1 to glutamate 56. The span at proline 30 to glutamine 46 shows a compositional bias: basic and acidic residues. Glutamate 56 participates in a covalent cross-link: Isoglutamyl lysine isopeptide (Glu-Lys) (interchain with K-? in acceptor proteins).

Belongs to the ubiquitin-like protein UBact family.

Functionally, may function as a protein modifier covalently attached to lysine residues of substrate proteins. This may serve to target the modified proteins for degradation by proteasomes. The polypeptide is Prokaryotic ubiquitin-like protein UBact (Acetithermum autotrophicum).